Reading from the N-terminus, the 289-residue chain is 4-diphosphocytidyl-2-C-methyl-D-erythritol kinase (289 aa).

Residue Lys10 is part of the active site. Position 94 to 104 (94 to 104 (PVAAGLAGGSS)) interacts with ATP. Asp136 is an active-site residue.

The protein belongs to the GHMP kinase family. IspE subfamily.

It catalyses the reaction 4-CDP-2-C-methyl-D-erythritol + ATP = 4-CDP-2-C-methyl-D-erythritol 2-phosphate + ADP + H(+). It functions in the pathway isoprenoid biosynthesis; isopentenyl diphosphate biosynthesis via DXP pathway; isopentenyl diphosphate from 1-deoxy-D-xylulose 5-phosphate: step 3/6. Functionally, catalyzes the phosphorylation of the position 2 hydroxy group of 4-diphosphocytidyl-2C-methyl-D-erythritol. The chain is 4-diphosphocytidyl-2-C-methyl-D-erythritol kinase from Bacillus cereus (strain G9842).